The primary structure comprises 329 residues: Very long chain fatty acid elongase 7 (329 aa).

The next 7 helical transmembrane spans lie at 26 to 46, 66 to 86, 114 to 134, 146 to 166, 170 to 190, 205 to 225, and 233 to 253; these read YPLMSSPFPTIAISLTYAYIV, LIVYNAAQVIFSAWLFYESCI, GCWWYYFSKFTEFFDTFFFVM, VIHHGIMPVSVWWGVKFTPGG, FFGFLNTFVHIFMYAYYMLAA, LTVMQMIQFVLVMVHSFQLFF, and IGFAYFIGAHAVMFYFLFSNF.

The protein belongs to the ELO family.

It is found in the membrane. The catalysed reaction is a very-long-chain acyl-CoA + malonyl-CoA + H(+) = a very-long-chain 3-oxoacyl-CoA + CO2 + CoA. In terms of biological role, catalyzes the first and rate-limiting reaction of the four reactions that constitute the long-chain fatty acids elongation cycle. This endoplasmic reticulum-bound enzymatic process allows the addition of 2 carbons to the chain of long- and very long-chain fatty acids (VLCFAs) per cycle. This Drosophila melanogaster (Fruit fly) protein is Very long chain fatty acid elongase 7.